A 2259-amino-acid polypeptide reads, in one-letter code: Golgin subfamily A member 4 (2259 aa).

The tract at residues 1-54 is disordered; that stretch reads MFKKLKQKISEEQQQLQQALAPAQASSSSSTPTRTRSRTSSFTDQLDDATPNRE. Ser-10 carries the phosphoserine modification. A compositionally biased stretch (low complexity) spans 12–41; the sequence is EQQQLQQALAPAQASSSSSTPTRTRSRTSS. Thr-39 carries the phosphothreonine modification. 3 positions are modified to phosphoserine: Ser-41, Ser-104, and Ser-111. Residues 165-235 are interaction with MACF1; sequence SLSREQLLQR…EELQMDQQAK (71 aa). Positions 167 to 2182 form a coiled coil; that stretch reads SREQLLQRLR…SYEKSVCAAA (2016 aa). Basic and acidic residues-rich tracts occupy residues 1932 to 1946 and 1954 to 1977; these read LEDR…HVIE and DGRH…LSKE. Residues 1932-1977 are disordered; sequence LEDRPEENSKSHVIESKLGTPMDGRHSDLESKLAGSEREKQKLSKE. Residues 2199–2246 enclose the GRIP domain; that stretch reads LFGEPTEFEYLRKVLFEYMMGRETKTMAKVITTVLRFPDDQAQKILER.

In terms of assembly, homodimer. Interacts with GTP-bound ARL1 and ARL3. Interacts with MACF1. Directly interacts with TBC1D23. Interacts with FAM91A1; this interaction may be mediated by TBC1D23. In terms of tissue distribution, expressed in the head of epididymal sperm but not in testicular sperm (at protein level).

Its subcellular location is the cytoplasm. It is found in the golgi apparatus membrane. The protein resides in the golgi apparatus. It localises to the trans-Golgi network membrane. Involved in vesicular trafficking at the Golgi apparatus level. May play a role in delivery of transport vesicles containing GPI-linked proteins from the trans-Golgi network through its interaction with MACF1. Involved in endosome-to-Golgi trafficking. This Rattus norvegicus (Rat) protein is Golgin subfamily A member 4.